A 576-amino-acid polypeptide reads, in one-letter code: K(+)/H(+) antiporter NhaP2 (576 aa).

13 helical membrane-spanning segments follow: residues 6-26 (INSF…LSPM), 34-54 (ILLI…GGIL), 58-78 (YSTA…DGGM), 87-107 (VALW…TSIT), 109-129 (MMAA…GAIV), 163-183 (PMAV…DTEM), 185-205 (FSFM…LGLG), 219-239 (LADG…YAAS), 242-262 (LGGS…NKPT), 271-291 (VLDG…GLLL), 299-319 (ILIP…PVAV), 335-355 (WFIS…VFPM), and 359-379 (LPGA…SLLV). The region spanning 405–486 (SGVEIYPSSE…LEALSNLFSQ (82 aa)) is the RCK C-terminal domain.

Belongs to the monovalent cation:proton antiporter 1 (CPA1) transporter (TC 2.A.36) family. NhaP2 subfamily.

Its subcellular location is the cell inner membrane. The catalysed reaction is K(+)(in) + H(+)(out) = K(+)(out) + H(+)(in). Its function is as follows. K(+)/H(+) antiporter that extrudes potassium in exchange for external protons and maintains the internal concentration of potassium under toxic levels. In Shewanella baltica (strain OS223), this protein is K(+)/H(+) antiporter NhaP2.